The following is a 120-amino-acid chain: Glycine cleavage system H protein (120 aa).

A Lipoyl-binding domain is found at Val17–Lys99. Position 58 is an N6-lipoyllysine (Lys58).

This sequence belongs to the GcvH family. The glycine cleavage system is composed of four proteins: P, T, L and H. (R)-lipoate serves as cofactor.

Its function is as follows. The glycine cleavage system catalyzes the degradation of glycine. The H protein shuttles the methylamine group of glycine from the P protein to the T protein. The polypeptide is Glycine cleavage system H protein (Sinorhizobium medicae (strain WSM419) (Ensifer medicae)).